Reading from the N-terminus, the 83-residue chain is Large ribosomal subunit protein bL31B (83 aa).

The protein belongs to the bacterial ribosomal protein bL31 family. Type B subfamily. As to quaternary structure, part of the 50S ribosomal subunit.

This chain is Large ribosomal subunit protein bL31B, found in Levilactobacillus brevis (strain ATCC 367 / BCRC 12310 / CIP 105137 / JCM 1170 / LMG 11437 / NCIMB 947 / NCTC 947) (Lactobacillus brevis).